The sequence spans 310 residues: Serine/threonine-protein kinase pim-2 (310 aa).

The 261-residue stretch at 30–290 (YTMGNLLGSG…LEQILQHPWM (261 aa)) folds into the Protein kinase domain. ATP-binding positions include 36 to 44 (LGSGGFGSV) and K59. D167 functions as the Proton acceptor in the catalytic mechanism.

It belongs to the protein kinase superfamily. CAMK Ser/Thr protein kinase family. PIM subfamily. In terms of processing, autophosphorylated.

The catalysed reaction is L-seryl-[protein] + ATP = O-phospho-L-seryl-[protein] + ADP + H(+). It carries out the reaction L-threonyl-[protein] + ATP = O-phospho-L-threonyl-[protein] + ADP + H(+). Its function is as follows. Proto-oncogene with serine/threonine kinase activity involved in cell survival and cell proliferation. The polypeptide is Serine/threonine-protein kinase pim-2 (pim2) (Danio rerio (Zebrafish)).